An 875-amino-acid chain; its full sequence is Alanine--tRNA ligase (875 aa).

Zn(2+) is bound by residues His564, His568, Cys666, and His670.

It belongs to the class-II aminoacyl-tRNA synthetase family. Homotetramer. Requires Zn(2+) as cofactor.

Its subcellular location is the cytoplasm. The catalysed reaction is tRNA(Ala) + L-alanine + ATP = L-alanyl-tRNA(Ala) + AMP + diphosphate. Catalyzes the attachment of alanine to tRNA(Ala) in a two-step reaction: alanine is first activated by ATP to form Ala-AMP and then transferred to the acceptor end of tRNA(Ala). Also edits incorrectly charged Ser-tRNA(Ala) and Gly-tRNA(Ala) via its editing domain. The chain is Alanine--tRNA ligase from Yersinia pestis bv. Antiqua (strain Angola).